A 172-amino-acid polypeptide reads, in one-letter code: Putative B3 domain-containing protein At1g05615 (172 aa).

A DNA-binding region (TF-B3) is located at residues 69–169 (VDEGKIIDFE…NLAMVPLTPT (101 aa)).

The protein resides in the nucleus. This chain is Putative B3 domain-containing protein At1g05615, found in Arabidopsis thaliana (Mouse-ear cress).